The chain runs to 328 residues: Nickel import system permease protein NikB (328 aa).

The next 6 helical transmembrane spans lie at 11–31, 104–124, 139–159, 170–190, 229–249, and 279–299; these read LMQM…LMKL, LLIS…LGII, VIST…LLFI, ILSQ…AYII, ILPI…GTVV, and VLFI…LTLL. Residues 100–297 form the ABC transmembrane type-1 domain; the sequence is APITLLISFS…IINTIADLLT (198 aa).

It belongs to the binding-protein-dependent transport system permease family. OppBC subfamily. As to quaternary structure, the complex is composed of two ATP-binding proteins (NikD and NikE), two transmembrane proteins (NikB and NikC) and a solute-binding protein (NikA).

Its subcellular location is the cell membrane. In terms of biological role, part of the ABC transporter complex NikABCDE (Opp2) involved in nickel import. Probably responsible for the translocation of the substrate across the membrane. This is Nickel import system permease protein NikB from Staphylococcus aureus (strain bovine RF122 / ET3-1).